We begin with the raw amino-acid sequence, 518 residues long: Glutamate--cysteine ligase (518 aa).

It belongs to the glutamate--cysteine ligase type 1 family. Type 1 subfamily.

The enzyme catalyses L-cysteine + L-glutamate + ATP = gamma-L-glutamyl-L-cysteine + ADP + phosphate + H(+). It functions in the pathway sulfur metabolism; glutathione biosynthesis; glutathione from L-cysteine and L-glutamate: step 1/2. The sequence is that of Glutamate--cysteine ligase from Salmonella typhi.